A 369-amino-acid chain; its full sequence is MSRLVYVIFLLVVVEGSRNTLERNTETNATEAKVEGKGTIKLPPNVTIPGIITFGDSIVDSGNNNHLRTALKCNFPPYGKDFPGKIATGRFSDGRVPSDIVAERLGIAETIPAYLNPKLKNEDLLKGVNFASGGSGYDPLTAKLVKVVSLSDQLKNFQEYKNKLKVIVGEEKANFLVKNSLYLVVASSNDIAHTYTARSIKYNKTSYADYLADSASKFVSALYGLGARRIGVFSAVPVGCVPAARTLRGKLKRRCSEKLNEVARNFNAKISPTLEALGKELPDSRVVLIDVCDTLNDMIENPKNYGFEVSNRGCCGTGLVEVLFLCNKINPFTCKNSSSYIFWDSYHPTEKAYQIIVDKLLGNYITKLV.

A signal peptide spans 1–16 (MSRLVYVIFLLVVVEG). N-linked (GlcNAc...) asparagine glycosylation is found at Asn-28 and Asn-45. Ser-57 (nucleophile) is an active-site residue. N-linked (GlcNAc...) asparagine glycans are attached at residues Asn-203 and Asn-336. Residues Asp-344 and His-347 contribute to the active site.

Belongs to the 'GDSL' lipolytic enzyme family.

Its subcellular location is the secreted. This chain is GDSL esterase/lipase At5g42170, found in Arabidopsis thaliana (Mouse-ear cress).